Consider the following 239-residue polypeptide: tRNA (guanine-N(7)-)-methyltransferase (239 aa).

S-adenosyl-L-methionine-binding residues include Glu-69, Glu-94, Asp-121, and Asp-144. Asp-144 is a catalytic residue. Position 148 (Lys-148) interacts with substrate. Positions Arg-150 to Arg-155 are interaction with RNA. Residues Asp-180 and Thr-217–Glu-220 contribute to the substrate site.

Belongs to the class I-like SAM-binding methyltransferase superfamily. TrmB family. In terms of assembly, monomer.

It carries out the reaction guanosine(46) in tRNA + S-adenosyl-L-methionine = N(7)-methylguanosine(46) in tRNA + S-adenosyl-L-homocysteine. The protein operates within tRNA modification; N(7)-methylguanine-tRNA biosynthesis. Functionally, catalyzes the formation of N(7)-methylguanine at position 46 (m7G46) in tRNA. The sequence is that of tRNA (guanine-N(7)-)-methyltransferase from Pectobacterium atrosepticum (strain SCRI 1043 / ATCC BAA-672) (Erwinia carotovora subsp. atroseptica).